A 435-amino-acid polypeptide reads, in one-letter code: Cytidine monophosphate-N-acetylneuraminic acid hydroxylase (435 aa).

The protein belongs to the CMP-Neu5Ac hydroxylase family. It depends on [2Fe-2S] cluster as a cofactor.

It is found in the cytoplasm. The catalysed reaction is CMP-N-acetyl-beta-neuraminate + 2 Fe(II)-[cytochrome b5] + O2 + 2 H(+) = CMP-N-glycoloyl-beta-neuraminate + 2 Fe(III)-[cytochrome b5] + H2O. It functions in the pathway amino-sugar metabolism; N-acetylneuraminate metabolism. In terms of biological role, sialic acids are components of carbohydrate chains of glycoconjugates and are involved in cell-cell recognition and cell-pathogen interactions. Catalyzes the conversion of CMP-N-acetylneuraminic acid (CMP-Neu5Ac) into its hydroxylated derivative CMP-N-glycolylneuraminic acid (CMP-Neu5Gc), a sialic acid abundantly expressed at the surface of many cells. The chain is Cytidine monophosphate-N-acetylneuraminic acid hydroxylase from Sus scrofa (Pig).